The chain runs to 238 residues: MSQSLIVALDFPGKQEVEQFLHHFEGEELFVKVGMELFYKEGPAIITYLKEKGHKIFLDLKLHDIPNTVKSAMRSLASLDVDMVNVHAAGGSSMMKAAIEGLEEGKQEGKERPICIAVTQLTSTSEAMMKKEIGIEKTLEEAVAHYAKLTKDSGLDGVVCSTLEVPKLREVCGNEFVTVTPGIRLASDDVNDQVRVATPKRARELGSSYIVVGRSITKAENPLEAYKTVKQQWEGVTV.

Residues D10, K32, 59-68 (DLKLHDIPNT), T122, R184, Q193, G213, and R214 each bind substrate. K61 functions as the Proton donor in the catalytic mechanism.

Belongs to the OMP decarboxylase family. Type 1 subfamily. In terms of assembly, homodimer.

The enzyme catalyses orotidine 5'-phosphate + H(+) = UMP + CO2. Its pathway is pyrimidine metabolism; UMP biosynthesis via de novo pathway; UMP from orotate: step 2/2. Functionally, catalyzes the decarboxylation of orotidine 5'-monophosphate (OMP) to uridine 5'-monophosphate (UMP). The protein is Orotidine 5'-phosphate decarboxylase of Bacillus cereus (strain G9842).